Here is a 394-residue protein sequence, read N- to C-terminus: Flavohemoprotein (394 aa).

In terms of domain architecture, Globin spans 1-136 (MLSENTINIV…LANVFIQREE (136 aa)). Histidine 85 provides a ligand contact to heme b. Active-site charge relay system residues include tyrosine 95 and glutamate 135. The segment at 147–394 (GGWRGLREFE…YECFGPHKVV (248 aa)) is reductase. The FAD-binding FR-type domain occupies 150-255 (RGLREFELVE…AAPAGDFFLD (106 aa)). FAD contacts are provided by residues tyrosine 188 and 204-207 (RQYS). 268–273 (GVGLTP) is an NADP(+) binding site. Residue 387–390 (CFGP) coordinates FAD.

The protein belongs to the globin family. Two-domain flavohemoproteins subfamily. It in the C-terminal section; belongs to the flavoprotein pyridine nucleotide cytochrome reductase family. Requires heme b as cofactor. It depends on FAD as a cofactor.

The enzyme catalyses 2 nitric oxide + NADPH + 2 O2 = 2 nitrate + NADP(+) + H(+). It catalyses the reaction 2 nitric oxide + NADH + 2 O2 = 2 nitrate + NAD(+) + H(+). In terms of biological role, is involved in NO detoxification in an aerobic process, termed nitric oxide dioxygenase (NOD) reaction that utilizes O(2) and NAD(P)H to convert NO to nitrate, which protects the bacterium from various noxious nitrogen compounds. Therefore, plays a central role in the inducible response to nitrosative stress. This Vibrio vulnificus (strain CMCP6) protein is Flavohemoprotein.